The sequence spans 253 residues: Homeotic protein ultrabithorax (253 aa).

Low complexity predominate over residues 125–141 (GNTSNGSNAPNAANGQN). The tract at residues 125–193 (GNTSNGSNAP…GNGTAGGVPQ (69 aa)) is disordered. The segment covering 176-189 (RGGGSAGGGNGTAG) has biased composition (gly residues). Residues 237-242 (FYPWMA) carry the Antp-type hexapeptide motif.

It belongs to the Antp homeobox family.

The protein resides in the nucleus. Its function is as follows. Sequence-specific transcription factor which is part of a developmental regulatory system that provides cells with specific positional identities on the anterior-posterior axis. Binds the consensus region 5'-TTAAT[GT][GA]-3'. This homeotic protein controls development of the cells in the posterior thoracic and first abdominal segments. It activates the synthesis of the decapentaplegic (DPP) growth factor. In Drosophila funebris (Fruit fly), this protein is Homeotic protein ultrabithorax (Ubx).